Consider the following 55-residue polypeptide: Large ribosomal subunit protein bL33 (55 aa).

It belongs to the bacterial ribosomal protein bL33 family.

The protein is Large ribosomal subunit protein bL33 of Photorhabdus laumondii subsp. laumondii (strain DSM 15139 / CIP 105565 / TT01) (Photorhabdus luminescens subsp. laumondii).